Consider the following 94-residue polypeptide: Co-chaperonin GroES (94 aa).

This sequence belongs to the GroES chaperonin family. As to quaternary structure, heptamer of 7 subunits arranged in a ring. Interacts with the chaperonin GroEL.

It localises to the cytoplasm. Together with the chaperonin GroEL, plays an essential role in assisting protein folding. The GroEL-GroES system forms a nano-cage that allows encapsulation of the non-native substrate proteins and provides a physical environment optimized to promote and accelerate protein folding. GroES binds to the apical surface of the GroEL ring, thereby capping the opening of the GroEL channel. The polypeptide is Co-chaperonin GroES (Lactobacillus helveticus (strain DPC 4571)).